The primary structure comprises 289 residues: Acetylglutamate kinase (289 aa).

Substrate is bound by residues 60 to 61 (GG), Arg82, and Asn182.

It belongs to the acetylglutamate kinase family. ArgB subfamily.

The protein localises to the cytoplasm. The enzyme catalyses N-acetyl-L-glutamate + ATP = N-acetyl-L-glutamyl 5-phosphate + ADP. The protein operates within amino-acid biosynthesis; L-arginine biosynthesis; N(2)-acetyl-L-ornithine from L-glutamate: step 2/4. Its function is as follows. Catalyzes the ATP-dependent phosphorylation of N-acetyl-L-glutamate. In Methanothrix thermoacetophila (strain DSM 6194 / JCM 14653 / NBRC 101360 / PT) (Methanosaeta thermophila), this protein is Acetylglutamate kinase.